The sequence spans 377 residues: Histone deacetylase 8 (377 aa).

The interval 14–324 (LVPVYIYSPE…WTYLTGVILG (311 aa)) is histone deacetylase. Ser-39 is modified (phosphoserine). Asp-101 is a substrate binding site. Catalysis depends on His-143, which acts as the Proton acceptor. Gly-151 is a substrate binding site. 3 residues coordinate a divalent metal cation: Asp-178, His-180, and Asp-267. Tyr-306 contributes to the substrate binding site.

This sequence belongs to the histone deacetylase family. HD type 1 subfamily. As to quaternary structure, interacts with PEPB2-MYH11, a fusion protein consisting of the 165 N-terminal residues of CBF-beta (PEPB2) with the tail region of MYH11 produced by the inversion Inv(16)(p13q22), a translocation associated with acute myeloid leukemia of M4EO subtype. The PEPB2-MYH1 fusion protein also interacts with RUNX1, a well known transcriptional regulator, suggesting that the interaction with HDAC8 may participate in the conversion of RUNX1 into a constitutive transcriptional repressor. Interacts with CBFA2T3. Interacts with phosphorylated SMG5/EST1B; this interaction protects SMG5 from ubiquitin-mediated degradation. Associates with alpha-SMA (smooth muscle alpha-actin). Requires a divalent metal cation as cofactor. In terms of processing, phosphorylated by PKA on serine 39. Phosphorylation reduces deacetylase activity observed preferentially on histones H3 and H4. Weakly expressed in most tissues. Expressed at higher level in heart, brain, kidney and pancreas and also in liver, lung, placenta, prostate and kidney.

Its subcellular location is the nucleus. It localises to the chromosome. It is found in the cytoplasm. The enzyme catalyses N(6)-acetyl-L-lysyl-[histone] + H2O = L-lysyl-[histone] + acetate. It carries out the reaction N(6)-acetyl-L-lysyl-[protein] + H2O = L-lysyl-[protein] + acetate. It catalyses the reaction N(6)-(2E)-butenoyl-L-lysyl-[protein] + H2O = (2E)-2-butenoate + L-lysyl-[protein]. Its activity is inhibited by trichostatin A (TSA), suberoylanilide hydroxamic acid (SAHA), 3-(1-methyl-4-phenylacetyl-1H-2-pyrrolyl)-N-hydroxy-2-propenamide (APHA), 4-dimethylamino-N-(6-hydroxycarbamoyethyl)benzamide-N-hydroxy-7-(4-dimethylaminobenzoyl)aminoheptanamide (MS-344), 5-(4-methyl-benzoylamino)-biphenyl-3,4'-dicarboxylic acid 3-dimethylamide 4'-hydroxyamide (CRA-A) and butyrate. Histone deacetylase that catalyzes the deacetylation of lysine residues on the N-terminal part of the core histones (H2A, H2B, H3 and H4). Histone deacetylation gives a tag for epigenetic repression and plays an important role in transcriptional regulation, cell cycle progression and developmental events. Histone deacetylases act via the formation of large multiprotein complexes. Also involved in the deacetylation of cohesin complex protein SMC3 regulating release of cohesin complexes from chromatin. May play a role in smooth muscle cell contractility. In addition to protein deacetylase activity, also has protein-lysine deacylase activity: acts as a protein decrotonylase by mediating decrotonylation ((2E)-butenoyl) of histones. The polypeptide is Histone deacetylase 8 (Homo sapiens (Human)).